The following is a 288-amino-acid chain: QGYSTVAFDGPPSYGHAPSHHAAQFSNHSFKHEDPIAQQTSLGDQQYSVPPPVYGCHTPTDSCTGSQALLLRTPYNSDNLYQMTSQLECMTWNQMNLGSTLKGHATGYENENHTAPMLYSCGAQYRIHTHGVFRGIQDVRRVPGVAPTIVRSASETNEKRPFMCAYPGCNKRYFKLSHLQMHSRKHTGEKPYQCDFKDCERRFSRSDQLKRHQRRHTGVKPFQCKTCQRKFSRSDHLKTHTRTHTGKTSEKPFSCRWPSCQKKFARSDELVRHHNMHQRNMTKLQLAL.

A disordered region spans residues 1 to 21 (QGYSTVAFDGPPSYGHAPSHH). Residues 90-98 (MTWNQMNLG) carry the 9aaTAD motif. 3 C2H2-type zinc fingers span residues 162–186 (FMCAYPGCNKRYFKLSHLQMHSRKH), 192–216 (YQCDFKDCERRFSRSDQLKRHQRRH), and 222–244 (FQCKTCQRKFSRSDHLKTHTRTH). Important for interaction with target DNA stretches follow at residues 206–220 (SDQLKRHQRRHTGVK) and 232–240 (SRSDHLKTH). The KTS motif signature appears at 247–249 (KTS). The segment at 253 to 277 (FSCRWPSCQKKFARSDELVRHHNMH) adopts a C2H2-type 4 zinc-finger fold.

This sequence belongs to the EGR C2H2-type zinc-finger protein family.

The protein localises to the nucleus speckle. The protein resides in the nucleus. Its subcellular location is the nucleoplasm. It localises to the cytoplasm. In terms of biological role, transcription factor that plays an important role in cellular development and cell survival. Recognizes and binds to the DNA sequence 5'-GCG(T/G)GGGCG-3'. Regulates the expression of numerous target genes. Plays an essential role for development of the urogenital system. It has a tumor suppressor as well as an oncogenic role in tumor formation. Function may be isoform-specific: isoforms lacking the KTS motif may act as transcription factors. Isoforms containing the KTS motif may bind mRNA and play a role in mRNA metabolism or splicing. In Alligator mississippiensis (American alligator), this protein is Wilms tumor protein homolog (WT1).